We begin with the raw amino-acid sequence, 195 residues long: MMIKWIISILTMSIMPVLVYSSSIFRFRSEDVELCYGNLYFDRIYNNVVNIKYIPEHIPYKYNFINRTFSVDELDNNVFFTHGYFLKHKYGSLNPSLIVSLSGNLKYNDIQCSVNVSCLIKNLATSISTILTSKHKTYSLHRSKCITIIGYDSIIWYKDINDKYNDIYDFTAICMLIASTLIVTIYVFKKIKMNS.

An N-terminal signal peptide occupies residues 1 to 21 (MMIKWIISILTMSIMPVLVYS). Residues 23–166 (SIFRFRSEDV…YKDINDKYND (144 aa)) lie on the Extracellular side of the membrane. 2 N-linked (GlcNAc...) asparagine; by host glycosylation sites follow: Asn66 and Asn115. A helical membrane pass occupies residues 167 to 187 (IYDFTAICMLIASTLIVTIYV). At 188 to 195 (FKKIKMNS) the chain is on the cytoplasmic side.

Belongs to the orthopoxvirus OPG172 protein family.

It localises to the host membrane. Its subcellular location is the host cell surface. The protein is Protein A43 (OPG172) of Homo sapiens (Human).